A 510-amino-acid polypeptide reads, in one-letter code: MTQKIEQSQRQERVAAWNRRAECDLAAFQNSPKQTYQAEKARDRKLCANLEEAIRRSGLQDGMTVSFHHAFRGGDLTVNMVMDVIAKMGFKNLTLASSSLSDCHAPLVEHIRQGVVTRIYTSGLRGPLAEEISRGLLAEPVQIHSHGGRVHLVQSGELNIDVAFLGVPSCDEFGNANGYTGKACCGSLGYAIVDADNAKQVVMLTEELLPYPHNPASIEQDQVDLIVKVDRVGDAAKIGAGATRMTTNPRELLIARSAADVIVNSGYFKEGFSMQTGTGGASLAVTRFLEDKMRSRDIRADFALGGITATMVDLHEKGLIRKLLDVQSFDSHAAQSLARNPNHIEISANQYANWGSKGASVDRLDVVVLSALEIDTQFNVNVLTGSDGVLRGASGGHCDTAIASALSIIVAPLVRGRIPTLVDNVLTCITPGSSVDILVTDHGIAVNPARPELAERLQEAGIKVVSIEWLRERARLLTGEPQPIEFTDRVVAVVRYRDGSVIDVVHQVKE.

In terms of assembly, oligomer with a subunit composition of (alpha,beta,gamma)6.

It localises to the cytoplasm. The enzyme catalyses citrate = oxaloacetate + acetate. The catalysed reaction is citrate + acetyl-CoA = (3S)-citryl-CoA + acetate. In terms of biological role, represents a citrate:acetyl-ACP transferase. The sequence is that of Citrate lyase alpha chain (citF) from Escherichia coli (strain K12).